The primary structure comprises 230 residues: Flagellar L-ring protein (230 aa).

Residues 1 to 15 (MSRLPSLSRPCLAIA) form the signal peptide. C16 carries N-palmitoyl cysteine lipidation. C16 carries S-diacylglycerol cysteine lipidation.

It belongs to the FlgH family. In terms of assembly, the basal body constitutes a major portion of the flagellar organelle and consists of four rings (L,P,S, and M) mounted on a central rod.

Its subcellular location is the cell outer membrane. It localises to the bacterial flagellum basal body. In terms of biological role, assembles around the rod to form the L-ring and probably protects the motor/basal body from shearing forces during rotation. This chain is Flagellar L-ring protein, found in Xanthomonas axonopodis pv. citri (strain 306).